Consider the following 634-residue polypeptide: UPF0313 protein PG_0934 (634 aa).

In terms of domain architecture, Radical SAM core spans 302 to 582; that stretch reads AYEMIKHSVN…RQHMFFFWYK (281 aa). 3 residues coordinate [4Fe-4S] cluster: cysteine 316, cysteine 320, and cysteine 323. Residues 607–634 are disordered; the sequence is DRTTSSRNDRHTPPSTQPRKSKSKSRHS. Positions 625-634 are enriched in basic residues; sequence RKSKSKSRHS.

This sequence belongs to the UPF0313 family. [4Fe-4S] cluster is required as a cofactor.

This chain is UPF0313 protein PG_0934, found in Porphyromonas gingivalis (strain ATCC BAA-308 / W83).